We begin with the raw amino-acid sequence, 561 residues long: 4-coumarate--CoA ligase 1 (561 aa).

ATP-binding residues include Ser-210, Ser-211, Gly-212, Thr-213, Thr-214, and Lys-218. (E)-4-coumaroyl-AMP is bound by residues Tyr-260 and Ser-264. CoA is bound at residue Lys-281. The SBD1 stretch occupies residues 283 to 352; that stretch reads EINLLLELIQ…AKFPNAKLGQ (70 aa). (E)-4-coumaroyl-AMP is bound by residues Ala-330, Gln-352, Gly-353, Thr-357, and Met-365. Residues Gln-352, Gly-353, and Thr-357 each coordinate ATP. The interval 353-420 is SBD2; it reads GYGMTEAGPV…IRGHQIMKGY (68 aa). The ATP site is built by Asp-441 and Arg-456. Residues Lys-458 and Lys-462 each contribute to the (E)-4-coumaroyl-AMP site. Residues Lys-464 and Gly-465 each coordinate CoA. Lys-547 provides a ligand contact to ATP.

Belongs to the ATP-dependent AMP-binding enzyme family. Requires Mg(2+) as cofactor. In terms of tissue distribution, preferentially expressed in roots, bolting stems and siliques. Also detected in leaves.

It catalyses the reaction (E)-4-coumarate + ATP + CoA = (E)-4-coumaroyl-CoA + AMP + diphosphate. The enzyme catalyses (E)-caffeate + ATP + CoA = (E)-caffeoyl-CoA + AMP + diphosphate. The catalysed reaction is (E)-ferulate + ATP + CoA = (E)-feruloyl-CoA + AMP + diphosphate. It carries out the reaction (E)-4-coumarate + ATP + H(+) = (E)-4-coumaroyl-AMP + diphosphate. It catalyses the reaction (E)-4-coumaroyl-AMP + CoA = (E)-4-coumaroyl-CoA + AMP + H(+). The enzyme catalyses (E)-caffeate + ATP + H(+) = (E)-caffeoyl-AMP + diphosphate. The catalysed reaction is (E)-caffeoyl-AMP + CoA = (E)-caffeoyl-CoA + AMP + H(+). It carries out the reaction (E)-ferulate + ATP + H(+) = (E)-feruloyl-AMP + diphosphate. It catalyses the reaction (E)-feruloyl-AMP + CoA = (E)-feruloyl-CoA + AMP + H(+). It functions in the pathway phytoalexin biosynthesis; 3,4',5-trihydroxystilbene biosynthesis; 3,4',5-trihydroxystilbene from trans-4-coumarate: step 1/2. In terms of biological role, produces CoA thioesters of a variety of hydroxy- and methoxy-substituted cinnamic acids, which are used to synthesize several phenylpropanoid-derived compounds, including anthocyanins, flavonoids, isoflavonoids, coumarins, lignin, suberin and wall-bound phenolics. Follows a two-step reaction mechanism, wherein the carboxylate substrate first undergoes adenylation by ATP, followed by a thioesterification in the presence of CoA to yield the final CoA thioesters. The chain is 4-coumarate--CoA ligase 1 from Arabidopsis thaliana (Mouse-ear cress).